A 468-amino-acid polypeptide reads, in one-letter code: Argininosuccinate lyase (468 aa).

The protein belongs to the lyase 1 family. Argininosuccinate lyase subfamily.

It localises to the cytoplasm. It carries out the reaction 2-(N(omega)-L-arginino)succinate = fumarate + L-arginine. It participates in amino-acid biosynthesis; L-arginine biosynthesis; L-arginine from L-ornithine and carbamoyl phosphate: step 3/3. This chain is Argininosuccinate lyase, found in Sphingopyxis alaskensis (strain DSM 13593 / LMG 18877 / RB2256) (Sphingomonas alaskensis).